The chain runs to 699 residues: Autophagy-related protein 9 (699 aa).

At 1–98 (MSHEDRGGDY…KGFMCIFFND (98 aa)) the chain is on the cytoplasmic side. Residues 99–119 (LFELVSSLFVVLFFTFLVCFV) form a helical membrane-spanning segment. Residues 120–139 (DYSKLFSEQMPPPALRESVN) are Lumenal-facing. A glycan (N-linked (GlcNAc...) asparagine) is linked at Asn-139. The helical transmembrane segment at 140–160 (FSAPIPIWLMVFLVIFSLYWL) threads the bilayer. Over 161–299 (SKLFSFFSSI…KRLSRGLSRR (139 aa)) the chain is Cytoplasmic. An intramembrane segment occupies 300-320 (FMTIGILGLFTTPFIFFFLLI). Over 321-385 (NFFFEYAEEL…ESFPSQMLST (65 aa)) the chain is Cytoplasmic. A helical transmembrane segment spans residues 386–406 (IAKFISFLFGSVLAVFIVLGI). The Lumenal segment spans residues 407–420 (VSDHFIMNYQIFDR). The helical transmembrane segment at 421-441 (TPIWYIGILGTIVAITRSLIV) threads the bilayer. The Cytoplasmic portion of the chain corresponds to 442–487 (DENQVFQPAKHMARTVQNTHYLPMSWVGKTHTHKVRDEFLVLFEYR). The stretch at 488–508 (IVDFVRDIFSVLFTPFILIFS) is an intramembrane region. Topologically, residues 509-699 (LPKSSQAIID…HKNDNFVNSI (191 aa)) are cytoplasmic. Positions 599–618 (IKNNNNNNNNNGSNNHIGNH) are enriched in low complexity. The tract at residues 599–620 (IKNNNNNNNNNGSNNHIGNHSQ) is disordered.

The protein belongs to the ATG9 family. Homotrimer; forms a homotrimer with a central pore that forms a path between the two membrane leaflets.

It localises to the preautophagosomal structure membrane. The protein localises to the cytoplasmic vesicle membrane. The enzyme catalyses a 1,2-diacyl-sn-glycero-3-phosphocholine(in) = a 1,2-diacyl-sn-glycero-3-phosphocholine(out). The catalysed reaction is a 1,2-diacyl-sn-glycero-3-phospho-L-serine(in) = a 1,2-diacyl-sn-glycero-3-phospho-L-serine(out). It catalyses the reaction a 1,2-diacyl-sn-glycero-3-phosphoethanolamine(in) = a 1,2-diacyl-sn-glycero-3-phosphoethanolamine(out). Phospholipid scramblase involved in autophagy by mediating autophagosomal membrane expansion. Cycles between the preautophagosomal structure/phagophore assembly site (PAS) and the cytoplasmic vesicle pool and supplies membrane for the growing autophagosome. Lipid scramblase activity plays a key role in preautophagosomal structure/phagophore assembly by distributing the phospholipids that arrive through ATG2 from the cytoplasmic to the luminal leaflet of the bilayer, thereby driving autophagosomal membrane expansion. Required for lipopolysaccharide (LPS)-enhanced bacterial clearance through the autophagic pathway. This chain is Autophagy-related protein 9 (atg9), found in Dictyostelium discoideum (Social amoeba).